The primary structure comprises 1163 residues: Receptor-type guanylate cyclase gcy-21 (1163 aa).

The signal sequence occupies residues 1 to 17; that stretch reads MLSAVLLLLFFIQNVQN. At 18-490 the chain is on the extracellular side; it reads FDKIELEDIT…ENCGPPANNT (473 aa). N-linked (GlcNAc...) asparagine glycosylation is found at Asn102, Asn296, Asn322, Asn346, Asn466, and Asn488. A helical transmembrane segment spans residues 491 to 511; it reads FIIVISVGVAVLIGLAIAAAF. At 512–1163 the chain is on the cytoplasmic side; sequence LYKRYRYERR…QIQEKTYEFS (652 aa). In terms of domain architecture, Protein kinase spans 587 to 882; that stretch reads FNTGSTARAG…QIKRKLKPLT (296 aa). Residues 593 to 601 and Lys635 contribute to the ATP site; that span reads ARAGPFGPI. The stretch at 901 to 930 forms a coiled coil; that stretch reads TDKLEKDIAERNEELEGEKAKSEALLKMML. The Guanylate cyclase domain occupies 953 to 1083; it reads TVFFSDCPGF…DTVNTASRME (131 aa).

This sequence belongs to the adenylyl cyclase class-4/guanylyl cyclase family. Expressed in ASG sensory neurons.

The protein localises to the cell membrane. It carries out the reaction GTP = 3',5'-cyclic GMP + diphosphate. In terms of biological role, guanylate cyclase involved in the production of the second messenger cGMP. Plays a role in dauer formation. In Caenorhabditis elegans, this protein is Receptor-type guanylate cyclase gcy-21.